We begin with the raw amino-acid sequence, 419 residues long: Akuammiline synthase 1 (419 aa).

Histidine 151 acts as the Proton acceptor in catalysis. The Nuclear localization signal signature appears at 206 to 213; the sequence is TRRFVFPA. The Proton acceptor role is filled by aspartate 359.

Belongs to the plant acyltransferase family. As to quaternary structure, monomer.

Its subcellular location is the cytoplasm. It localises to the nucleus. It catalyses the reaction rhazimol + acetyl-CoA = akuammiline + CoA + H(+). It participates in alkaloid biosynthesis. In terms of biological role, acyltransferase involved in the biosynthesis of akuammilan monoterpene indole alkaloids (MIAs) natural products, components with various biological properties such as antidiabetic, antibacterial, anti-inflammatory, anticancer, and antimalarial activities. Catalyzes the conversion of rhazimol to akuammiline. This is Akuammiline synthase 1 from Alstonia scholaris (Dogbane).